A 192-amino-acid chain; its full sequence is MAP6 domain-containing protein 1 (192 aa).

S-palmitoyl cysteine attachment occurs at residues cysteine 5, cysteine 10, and cysteine 11. The segment at 36–106 (LESEEPIPGG…RTKPSATPGR (71 aa)) is disordered. Position 38 is a phosphoserine (serine 38). Over residues 43–58 (PGGVPSRRGPSPAGSR) the composition is skewed to low complexity. Mn regions lie at residues 123 to 136 (TTSY…WTGV) and 158 to 170 (DGSP…APEV). The residue at position 160 (serine 160) is a Phosphoserine.

Belongs to the STOP family. Interacts with calmodulin. Palmitoylated. Palmitoylation enhances association with microtubules.

It localises to the golgi apparatus. The protein resides in the cytoplasm. It is found in the cytoskeleton. Its function is as follows. May have microtubule-stabilizing activity. The polypeptide is MAP6 domain-containing protein 1 (MAP6D1) (Bos taurus (Bovine)).